A 323-amino-acid chain; its full sequence is Cyclin-H (323 aa).

At S5 the chain carries Phosphoserine; by CDK8. Phosphoserine is present on S132. Residues 297–323 (YEDDDYVSKKSKHEEEEWTDDDLVESL) are disordered. Basic and acidic residues predominate over residues 302 to 311 (YVSKKSKHEE). Position 304 is a phosphoserine; by CDK8 (S304). A compositionally biased stretch (acidic residues) spans 312–323 (EEWTDDDLVESL). T315 is subject to Phosphothreonine. A Phosphoserine modification is found at S322.

The protein belongs to the cyclin family. Cyclin C subfamily. As to quaternary structure, associates primarily with CDK7 and MAT1 to form the CAK complex. CAK can further associate with the core-TFIIH to form the TFIIH basal transcription factor.

The protein localises to the nucleus. Regulates CDK7, the catalytic subunit of the CDK-activating kinase (CAK) enzymatic complex. CAK activates the cyclin-associated kinases CDK1, CDK2, CDK4 and CDK6 by threonine phosphorylation. CAK complexed to the core-TFIIH basal transcription factor activates RNA polymerase II by serine phosphorylation of the repetitive C-terminal domain (CTD) of its large subunit (POLR2A), allowing its escape from the promoter and elongation of the transcripts. Involved in cell cycle control and in RNA transcription by RNA polymerase II. Its expression and activity are constant throughout the cell cycle. This Homo sapiens (Human) protein is Cyclin-H (CCNH).